The sequence spans 263 residues: Acyl-[acyl-carrier-protein]--UDP-N-acetylglucosamine O-acyltransferase (263 aa).

Belongs to the transferase hexapeptide repeat family. LpxA subfamily. As to quaternary structure, homotrimer.

The protein localises to the cytoplasm. The catalysed reaction is a (3R)-hydroxyacyl-[ACP] + UDP-N-acetyl-alpha-D-glucosamine = a UDP-3-O-[(3R)-3-hydroxyacyl]-N-acetyl-alpha-D-glucosamine + holo-[ACP]. The protein operates within glycolipid biosynthesis; lipid IV(A) biosynthesis; lipid IV(A) from (3R)-3-hydroxytetradecanoyl-[acyl-carrier-protein] and UDP-N-acetyl-alpha-D-glucosamine: step 1/6. Involved in the biosynthesis of lipid A, a phosphorylated glycolipid that anchors the lipopolysaccharide to the outer membrane of the cell. The sequence is that of Acyl-[acyl-carrier-protein]--UDP-N-acetylglucosamine O-acyltransferase from Stenotrophomonas maltophilia (strain R551-3).